The primary structure comprises 174 residues: Translation initiation factor IF-3 (174 aa).

It belongs to the IF-3 family. In terms of assembly, monomer.

It is found in the cytoplasm. Functionally, IF-3 binds to the 30S ribosomal subunit and shifts the equilibrium between 70S ribosomes and their 50S and 30S subunits in favor of the free subunits, thus enhancing the availability of 30S subunits on which protein synthesis initiation begins. The chain is Translation initiation factor IF-3 from Helicobacter hepaticus (strain ATCC 51449 / 3B1).